Consider the following 88-residue polypeptide: Large ribosomal subunit protein bL31B (88 aa).

This sequence belongs to the bacterial ribosomal protein bL31 family. Type B subfamily. In terms of assembly, part of the 50S ribosomal subunit.

This is Large ribosomal subunit protein bL31B from Paraburkholderia xenovorans (strain LB400).